The sequence spans 337 residues: Glyceraldehyde-3-phosphate dehydrogenase 2 (337 aa).

Residues 11-12 (RI), D35, R80, and T122 contribute to the NADP(+) site. Residues 153-155 (SCT), T184, R199, 212-213 (TG), and R235 each bind D-glyceraldehyde 3-phosphate. Residue C154 is the Nucleophile of the active site. Residue N317 participates in NADP(+) binding.

It belongs to the glyceraldehyde-3-phosphate dehydrogenase family. As to quaternary structure, homotetramer.

It localises to the cytoplasm. The enzyme catalyses D-glyceraldehyde 3-phosphate + phosphate + NADP(+) = (2R)-3-phospho-glyceroyl phosphate + NADPH + H(+). It catalyses the reaction D-glyceraldehyde 3-phosphate + phosphate + NAD(+) = (2R)-3-phospho-glyceroyl phosphate + NADH + H(+). It functions in the pathway carbohydrate biosynthesis; Calvin cycle. In terms of biological role, gap2 has a major role in carbon fixation as a component of the Calvin cycle. Catalyzes the oxidative phosphorylation of glyceraldehyde 3-phosphate (G3P) to 1,3-bisphosphoglycerate (BPG) using the cofactor NAD. The first reaction step involves the formation of a hemiacetal intermediate between G3P and a cysteine residue, and this hemiacetal intermediate is then oxidized to a thioester, with concomitant reduction of NAD to NADH. The reduced NADH is then exchanged with the second NAD, and the thioester is attacked by a nucleophilic inorganic phosphate to produce BPG. The protein is Glyceraldehyde-3-phosphate dehydrogenase 2 (gap2) of Trichormus variabilis (strain ATCC 29413 / PCC 7937) (Anabaena variabilis).